We begin with the raw amino-acid sequence, 415 residues long: [Pyruvate dehydrogenase (acetyl-transferring)] kinase isozyme 3, mitochondrial (415 aa).

The Histidine kinase domain occupies 131–362; it reads IEYKEKFGFD…DAVIYLKALS (232 aa). ATP is bound at residue 247–254; sequence ELFKNSMR. Lys-278 carries the N6-succinyllysine modification. Residues Asp-287, 306-307, and 323-328 contribute to the ATP site; these read ST and GFGYGL. The tract at residues 383–415 is disordered; that stretch reads TPEADDWSNPSSEPRDASKYKAKQDKIKSNRTF. Residues 395–415 are compositionally biased toward basic and acidic residues; sequence EPRDASKYKAKQDKIKSNRTF.

It belongs to the PDK/BCKDK protein kinase family. As to quaternary structure, homodimer. Interacts with the pyruvate dehydrogenase complex subunit DLAT, and is part of the multimeric pyruvate dehydrogenase complex that contains multiple copies of pyruvate dehydrogenase (E1), dihydrolipoamide acetyltransferase (DLAT, E2) and lipoamide dehydrogenase (DLD, E3).

It is found in the mitochondrion matrix. It carries out the reaction L-seryl-[pyruvate dehydrogenase E1 alpha subunit] + ATP = O-phospho-L-seryl-[pyruvate dehydrogenase E1 alpha subunit] + ADP + H(+). In terms of biological role, inhibits pyruvate dehydrogenase activity by phosphorylation of the E1 subunit PDHA1, and thereby regulates glucose metabolism and aerobic respiration. Can also phosphorylate PDHA2. Decreases glucose utilization and increases fat metabolism in response to prolonged fasting, and as adaptation to a high-fat diet. Plays a role in glucose homeostasis and in maintaining normal blood glucose levels in function of nutrient levels and under starvation. Plays a role in the generation of reactive oxygen species. The sequence is that of [Pyruvate dehydrogenase (acetyl-transferring)] kinase isozyme 3, mitochondrial (Pdk3) from Mus musculus (Mouse).